The following is a 360-amino-acid chain: Membrane-bound lytic murein transglycosylase C (360 aa).

A signal peptide spans 1-16; that stretch reads MKKYLALALIAPLLVS. A lipid anchor (N-palmitoyl cysteine) is attached at Cys-17. Cys-17 is lipidated: S-diacylglycerol cysteine.

Belongs to the transglycosylase Slt family.

The protein resides in the cell outer membrane. The catalysed reaction is Exolytic cleavage of the (1-&gt;4)-beta-glycosidic linkage between N-acetylmuramic acid (MurNAc) and N-acetylglucosamine (GlcNAc) residues in peptidoglycan, from either the reducing or the non-reducing ends of the peptidoglycan chains, with concomitant formation of a 1,6-anhydrobond in the MurNAc residue.. Functionally, murein-degrading enzyme. May play a role in recycling of muropeptides during cell elongation and/or cell division. The sequence is that of Membrane-bound lytic murein transglycosylase C from Klebsiella pneumoniae (strain 342).